The primary structure comprises 558 residues: Putative ABC transporter ATP-binding protein SMU_1934c (558 aa).

ABC transporter domains follow at residues 5–246 (IEFK…GIRE) and 295–527 (FDIQ…ANLK). ATP contacts are provided by residues 39–46 (GPSGSGKS) and 328–335 (GKNGAGKS).

The protein belongs to the ABC transporter superfamily.

It localises to the cell membrane. Probably part of an ABC transporter complex. Responsible for energy coupling to the transport system. This chain is Putative ABC transporter ATP-binding protein SMU_1934c (sdcBA), found in Streptococcus mutans serotype c (strain ATCC 700610 / UA159).